Here is a 692-residue protein sequence, read N- to C-terminus: Ino eighty subunit 1 (692 aa).

Residues 1–25 are compositionally biased toward basic and acidic residues; sequence MGKRVYDPIHDTFQLREDNSDETKA. Residues 1–133 form a disordered region; the sequence is MGKRVYDPIH…RHLKKPDGEP (133 aa). Ser-27 bears the Phosphoserine mark. The span at 28–56 shows a compositional bias: polar residues; it reads PMQSVKSGSQEEASPSSIQSETETVTTKS. Residues 64–80 are compositionally biased toward acidic residues; the sequence is EIDDKNDDDSTQSEEEN. Polar residues predominate over residues 97-109; that stretch reads GASTATGPVTTNT. Residues 340–385 adopt a coiled-coil conformation; it reads SKYVEVESKAQEQDMVDEQNEVKETEAENEKQESKAAYATTLFDIL. Basic and acidic residues predominate over residues 465–485; it reads FMSKMEEGRKRERTNVTEVKK. A disordered region spans residues 465–550; sequence FMSKMEEGRK…VTPAAPTETE (86 aa). 3 positions are modified to phosphoserine: Ser-487, Ser-493, and Ser-504. Residues 493–504 show a composition bias toward acidic residues; sequence SEEDGEGEDDKS. Phosphothreonine is present on Thr-507. Residues 513-528 show a composition bias toward polar residues; the sequence is SLLTPTPILESSSPMT.

As to quaternary structure, component of the chromatin-remodeling INO80 complex, at least composed of ARP4, ARP5, ARP8, RVB1, RVB2, TAF14, NHP10, IES1, IES3, IES4, IES6, ACT1, IES2, IES5 and INO80.

The protein resides in the nucleus. In terms of biological role, probably involved in transcription regulation via its interaction with the INO80 complex, a chromatin-remodeling complex. This Saccharomyces cerevisiae (strain ATCC 204508 / S288c) (Baker's yeast) protein is Ino eighty subunit 1 (IES1).